A 179-amino-acid chain; its full sequence is Early E3 20.1 kDa glycoprotein (179 aa).

Residues Asn29, Asn57, Asn70, Asn75, and Asn123 are each glycosylated (N-linked (GlcNAc...) asparagine; by host).

It belongs to the adenoviridae E3_20 family.

Functionally, E3 proteins seem to be dispensable for virus growth in tissue culture cells. They are potentially important for virus growth under special conditions; E3 region may help adenoviruses to evade the immune surveillance of the host. In Homo sapiens (Human), this protein is Early E3 20.1 kDa glycoprotein.